A 307-amino-acid chain; its full sequence is N-acetylglucosamine-1-phosphotransferase subunit gamma (307 aa).

A signal peptide spans 1–24; it reads MAGRLAGFLMLLGLASQGPAPAYA. The MRH domain maps to 69–171; the sequence is GKCFSLVEST…TFETPLVCHP (103 aa). Cysteines 71 and 84 form a disulfide. N-linked (GlcNAc...) asparagine glycosylation is found at N88 and N115. 2 disulfide bridges follow: C129–C157 and C142–C169. The DMAP1-binding domain maps to 176–279; sequence VYPTLSEALQ…HTQPTETTHS (104 aa).

In terms of assembly, homodimer; disulfide-linked. Hexamer of two alpha (GNPTAB), two beta (GNPTAB) and two gamma (GNPTG) subunits; disulfide-linked. The alpha and/or the beta subunits of the enzyme constitute the catalytic subunits. Post-translationally, cys-245 mediates the formation of the interchain disulfide bond for formation of the homodimer. Cys-142, Cys-157 and Cys-169 are involved in intramolecular disulfide bonds formation. As to expression, widely expressed. Highly expressed in the liver, intestine, brain, thymus, testis and ovary.

It is found in the secreted. Its subcellular location is the golgi apparatus. Functionally, non-catalytic subunit of the N-acetylglucosamine-1-phosphotransferase complex, an enzyme that catalyzes the formation of mannose 6-phosphate (M6P) markers on high mannose type oligosaccharides in the Golgi apparatus. Binds and presents the high mannose glycans of the acceptor to the catalytic alpha and beta subunits (GNPTAB). Enhances the rate of N-acetylglucosamine-1-phosphate transfer to the oligosaccharides of acid hydrolase acceptors. The sequence is that of N-acetylglucosamine-1-phosphotransferase subunit gamma (Gnptg) from Mus musculus (Mouse).